Consider the following 253-residue polypeptide: Methionine aminopeptidase A (253 aa).

H80 lines the substrate pocket. D98, D109, and H172 together coordinate a divalent metal cation. Position 179 (H179) interacts with substrate. A divalent metal cation is bound by residues E205 and E236.

The protein belongs to the peptidase M24A family. Methionine aminopeptidase type 1 subfamily. In terms of assembly, monomer. Co(2+) is required as a cofactor. The cofactor is Zn(2+). It depends on Mn(2+) as a cofactor. Requires Fe(2+) as cofactor.

The catalysed reaction is Release of N-terminal amino acids, preferentially methionine, from peptides and arylamides.. Removes the N-terminal methionine from nascent proteins. The N-terminal methionine is often cleaved when the second residue in the primary sequence is small and uncharged (Met-Ala-, Cys, Gly, Pro, Ser, Thr, or Val). Requires deformylation of the N(alpha)-formylated initiator methionine before it can be hydrolyzed. The protein is Methionine aminopeptidase A of Synechocystis sp. (strain ATCC 27184 / PCC 6803 / Kazusa).